Consider the following 142-residue polypeptide: Large ribosomal subunit protein uL23 (142 aa).

K61 is covalently cross-linked (Glycyl lysine isopeptide (Lys-Gly) (interchain with G-Cter in SUMO)).

This sequence belongs to the universal ribosomal protein uL23 family. As to quaternary structure, component of the large ribosomal subunit (LSU). Mature yeast ribosomes consist of a small (40S) and a large (60S) subunit. The 40S small subunit contains 1 molecule of ribosomal RNA (18S rRNA) and 33 different proteins (encoded by 57 genes). The large 60S subunit contains 3 rRNA molecules (25S, 5.8S and 5S rRNA) and 46 different proteins (encoded by 81 genes). uL23 is associated with the polypeptide exit tunnel.

The protein resides in the cytoplasm. Its function is as follows. Component of the ribosome, a large ribonucleoprotein complex responsible for the synthesis of proteins in the cell. The small ribosomal subunit (SSU) binds messenger RNAs (mRNAs) and translates the encoded message by selecting cognate aminoacyl-transfer RNA (tRNA) molecules. The large subunit (LSU) contains the ribosomal catalytic site termed the peptidyl transferase center (PTC), which catalyzes the formation of peptide bonds, thereby polymerizing the amino acids delivered by tRNAs into a polypeptide chain. The nascent polypeptides leave the ribosome through a tunnel in the LSU and interact with protein factors that function in enzymatic processing, targeting, and the membrane insertion of nascent chains at the exit of the ribosomal tunnel. uL23 is a major component of the universal docking site for these factors at the polypeptide exit tunnel. The chain is Large ribosomal subunit protein uL23 from Saccharomyces cerevisiae (strain ATCC 204508 / S288c) (Baker's yeast).